A 157-amino-acid chain; its full sequence is Protein Smg (157 aa).

It belongs to the Smg family.

The sequence is that of Protein Smg from Buchnera aphidicola subsp. Acyrthosiphon pisum (strain Tuc7).